We begin with the raw amino-acid sequence, 1072 residues long: Integrin alpha-6 (1072 aa).

Positions 1–18 are cleaved as a signal peptide; sequence MAAALLLYLPLLPGLAGA. Topologically, residues 19–1010 are extracellular; sequence FNLDAENVIG…FPAKPVALYT (992 aa). 7 FG-GAP repeats span residues 23 to 88, 94 to 160, 170 to 223, 238 to 295, 296 to 357, 358 to 413, and 414 to 476; these read AENV…DTRC, DEDT…IKDD, DGRL…FYDL, RQDK…QRAL, SLEH…KWEG, IKPI…GINT, and EPAQ…VQPD. N-linked (GlcNAc...) asparagine glycosylation occurs at Asn71. Disulfide bonds link Cys79/Cys88, Cys125/Cys148, and Cys169/Cys182. 2 N-linked (GlcNAc...) asparagine glycosylation sites follow: Asn217 and Asn278. The Ca(2+) site is built by Asp318, Asn320, Asp322, and Asp326. The N-linked (GlcNAc...) asparagine glycan is linked to Asn364. Ca(2+)-binding residues include Asp380, Asn382, Asp384, Tyr386, Asp388, Asp438, Asp440, Asn442, Tyr444, and Asp446. A disulfide bridge connects residues Cys498 and Cys557. Asn515 and Asn609 each carry an N-linked (GlcNAc...) asparagine glycan. 2 disulfide bridges follow: Cys625/Cys631 and Cys725/Cys736. 3 N-linked (GlcNAc...) asparagine glycosylation sites follow: Asn730, Asn747, and Asn780. Intrachain disulfides connect Cys880/Cys927 and Cys933/Cys938. Asn957 carries an N-linked (GlcNAc...) asparagine glycan. Residues 1011–1036 traverse the membrane as a helical segment; it reads GVPWWIIAVAIFAGVLMLALLVFLLW. The Cytoplasmic segment spans residues 1037-1072; the sequence is KCGFFKRSKKDHYDATYHKAEIHAQPSDKERLTSDA. The S-palmitoyl cysteine; by DHHC3 moiety is linked to residue Cys1038. The GFFKR motif motif lies at 1039–1043; that stretch reads GFFKR. Ser1070 is subject to Phosphoserine; by CaMK2.

It belongs to the integrin alpha chain family. As to quaternary structure, heterodimer of an alpha and a beta subunit. The alpha subunit is composed of a heavy and a light chain linked by a disulfide bond. Alpha-6 associates with either beta-1 (ITGB1) or beta-4 (ITGB4) to form ITGA6:ITGB1 and ITGA6:ITGB4, respectively. Phosphorylated in vivo.

It localises to the cell membrane. Integrin alpha-6/beta-1 (ITGA6:ITGB1) is a receptor for laminin on platelets. Integrin alpha-6/beta-1 (ITGA6:ITGB1) is present in oocytes and is involved in sperm-egg fusion. Integrin alpha-6/beta-4 (ITGA6:ITGB4) is a receptor for laminin in epithelial cells and it plays a critical structural role in the hemidesmosome. This chain is Integrin alpha-6 (ITGA6), found in Gallus gallus (Chicken).